We begin with the raw amino-acid sequence, 406 residues long: Autotransporter heptosyltransferase TibC (406 aa).

Residues Thr107, Leu108, and Gly109 each coordinate ADP-D-glycero-beta-D-manno-heptose. Residue Asp110 is the Proton acceptor of the active site. Positions 224, 226, 230, 257, 281, 302, and 326 each coordinate ADP-D-glycero-beta-D-manno-heptose. Cys339, Cys342, Cys358, and Cys370 together coordinate Fe(3+).

Belongs to the glycosyltransferase 9 family. In terms of assembly, homododecamer composed of 6 homodimers forming a ring. Fe(3+) serves as cofactor.

It carries out the reaction ADP-D-glycero-beta-D-manno-heptose + L-seryl-[protein] = O-(D-glycero-alpha-D-manno-heptosyl)-L-seryl-[protein] + ADP + H(+). In terms of biological role, glycosylates adhesin TibA. Specifically adds anomer D-glycero-beta-D-manno-heptose. Cannot use ADP-L-glycero-beta-D-manno-heptose as a sugar donor. This is Autotransporter heptosyltransferase TibC from Escherichia coli O78:H11 (strain H10407 / ETEC).